Reading from the N-terminus, the 415-residue chain is Chorismate synthase (415 aa).

Positions 43–72 are disordered; it reads EDLDRRKPGQSMITTSRGEPDKVSIKSGLQ. Residue arginine 48 participates in NADP(+) binding. FMN contacts are provided by residues 125-127, glycine 304, 319-323, and arginine 346; these read RSS and HAPVS. Positions 262–310 are disordered; the sequence is TDYTEDWEFGESEATASENASGDEPRARGDPKPVGNDHGGIQGGITTGD. The span at 298 to 307 shows a compositional bias: gly residues; sequence DHGGIQGGIT. Positions 379 to 393 are enriched in basic and acidic residues; the sequence is PDRLDDRPGEYDTDY. The tract at residues 379 to 415 is disordered; sequence PDRLDDRPGEYDTDYHPSSPRNDPEDADTHATTVDED.

This sequence belongs to the chorismate synthase family. Requires FMNH2 as cofactor.

The enzyme catalyses 5-O-(1-carboxyvinyl)-3-phosphoshikimate = chorismate + phosphate. It participates in metabolic intermediate biosynthesis; chorismate biosynthesis; chorismate from D-erythrose 4-phosphate and phosphoenolpyruvate: step 7/7. Functionally, catalyzes the anti-1,4-elimination of the C-3 phosphate and the C-6 proR hydrogen from 5-enolpyruvylshikimate-3-phosphate (EPSP) to yield chorismate, which is the branch point compound that serves as the starting substrate for the three terminal pathways of aromatic amino acid biosynthesis. This reaction introduces a second double bond into the aromatic ring system. This chain is Chorismate synthase, found in Halomicrobium mukohataei (strain ATCC 700874 / DSM 12286 / JCM 9738 / NCIMB 13541) (Haloarcula mukohataei).